The following is a 198-amino-acid chain: Host transcription reprogramming factor 1 (198 aa).

A signal peptide spans 1–19; sequence MQLSNFLSIWALVAMGATA. Disordered stretches follow at residues 21–59 and 71–198; these read PMPS…SYHS and ERLA…PVQL. Residues 58 to 81 form a C2H2-type zinc finger; that stretch reads HSCETCAAPFRTEERLAAHRQADH. Composition is skewed to basic and acidic residues over residues 71–80, 104–128, and 167–177; these read ERLAAHRQAD, TSER…RSQE, and KLDKPTRKEQY.

Its subcellular location is the secreted. It is found in the host nucleus. Its function is as follows. Secreted effector that translocates into the nuclei of host cells to reprogram the expression of immunity-associated genes by binding to effector binding elements (EBEs) in rice. Binds the 5'-CAATCTTC-3' EBE of promoters from targeted rice genes and probably recruits a yet to be determined host repressor. Causes ambivalent immunity with increased susceptibility to the hemibiotrophic pathogens Magnaporthe oryzae and Xanthomonas oryzae pv. oryzae, but enhances resistance to Cochliobolus miyabeanus, a necrotrophic pathogen. The sequence is that of Host transcription reprogramming factor 1 from Pyricularia oryzae (strain 70-15 / ATCC MYA-4617 / FGSC 8958) (Rice blast fungus).